A 92-amino-acid chain; its full sequence is Phosphoribosyl-ATP pyrophosphatase (92 aa).

This sequence belongs to the PRA-PH family.

Its subcellular location is the cytoplasm. It catalyses the reaction 1-(5-phospho-beta-D-ribosyl)-ATP + H2O = 1-(5-phospho-beta-D-ribosyl)-5'-AMP + diphosphate + H(+). It participates in amino-acid biosynthesis; L-histidine biosynthesis; L-histidine from 5-phospho-alpha-D-ribose 1-diphosphate: step 2/9. The polypeptide is Phosphoribosyl-ATP pyrophosphatase (Leptospira interrogans serogroup Icterohaemorrhagiae serovar copenhageni (strain Fiocruz L1-130)).